The primary structure comprises 197 residues: Tic20 family protein Ycf60 (197 aa).

Transmembrane regions (helical) follow at residues 3–23 (IIIASYGVLIIVLAIGIGVGV), 47–66 (FGYYLLPVLECMTHCGPDVL), 81–101 (LVVVYSTYPILGFMIFFMSYF), 118–138 (VSQALIIYLLTSIIGSLLNAL), and 141–161 (MILMGWFGSTCLDILFILTMG).

The protein belongs to the Tic20 family.

The protein resides in the plastid. Its subcellular location is the chloroplast membrane. This Cyanidioschyzon merolae (strain NIES-3377 / 10D) (Unicellular red alga) protein is Tic20 family protein Ycf60 (ycf60).